A 320-amino-acid chain; its full sequence is Mitochondrial glutamate carrier 2 (320 aa).

3 Solcar repeats span residues 11-97, 105-215, and 224-313; these read LSIT…LRQL, RNLK…LNQL, and ASFT…GIGE. The next 3 membrane-spanning stretches (helical) occupy residues 17–37, 66–86, and 111–131; these read LING…IDLA, FLGM…EKAI, and MLAG…MEML. Serine 150 is modified (phosphoserine). A run of 3 helical transmembrane segments spans residues 190–210, 230–250, and 293–313; these read GLGA…PLFA, FVAG…LDVL, and ALVI…GIGE.

This sequence belongs to the mitochondrial carrier (TC 2.A.29) family.

It is found in the mitochondrion inner membrane. The enzyme catalyses L-glutamate(in) + H(+)(in) = L-glutamate(out) + H(+)(out). Responsible for the transport of glutamate from the cytosol into the mitochondrial matrix with the concomitant import of a proton (symport system). The polypeptide is Mitochondrial glutamate carrier 2 (Slc25a18) (Rattus norvegicus (Rat)).